The following is a 158-amino-acid chain: Transcription elongation factor GreA (158 aa).

This sequence belongs to the GreA/GreB family.

Necessary for efficient RNA polymerase transcription elongation past template-encoded arresting sites. The arresting sites in DNA have the property of trapping a certain fraction of elongating RNA polymerases that pass through, resulting in locked ternary complexes. Cleavage of the nascent transcript by cleavage factors such as GreA or GreB allows the resumption of elongation from the new 3'terminus. GreA releases sequences of 2 to 3 nucleotides. This chain is Transcription elongation factor GreA, found in Sinorhizobium medicae (strain WSM419) (Ensifer medicae).